A 638-amino-acid polypeptide reads, in one-letter code: MVINPSTIVSTLSMSIMAILAVSIFFFSKSYFYPPQNNNLVSFRVSNDTLSNNPNGSSLDYNSGPFAISVLKTLAFLSVISLLISVQNSFKSINLTFSLWFNNTPTNVSINFLLDQYFLLFLSVGLIVTWSIMEFSYYYMKEDPNGKAFFRPFGHFSLNMLILTSSNSLFLVFLGWEGVGFLSFLLISWWATRNDASSSALEAVIYNRIGDIGLITFMSLAVLTTNSWNLTEIITNEPNNHFVLFMLFGLILAAAGKSAQFGLHPWLPAAMEGPTPVSALLHSSTMVVAGVFLLVRTSELFSNYPNANTIVLVLGGTTALFAASTAIAQHDIKKIIAYSTTSQLGLMVAAIGIGQPVLAFFHICTHAFFKAMLFLCLGSVIHSLNNERNLRKMEGISDLSPVTSACLAMGSLALMGTPFLAGFYSKDLILEAASASFANTLGISLGIVATMLTTVYSFRIVFFCFSSNNSISPLSPIGEENSNLINALLRLSIGTILSGWFFSNFIFSPPSFTVTPEEKGLPLLVTVVGLTVIFISLSYLSSNPIKSTSHSTTTSQWFFVDIVHSALTTTSFISSSFSSSRTLDRGWQENIGAQGIAQSSTALSKANQASQIGLIKRYIASSIAAITIIATLTFIVLS.

15 consecutive transmembrane segments (helical) span residues 7–27, 66–86, 112–132, 169–189, 203–223, 242–262, 275–295, 307–327, 335–354, 365–385, 404–424, 445–465, 487–507, 520–540, and 618–638; these read TIVSTLSMSIMAILAVSIFFF, FAISVLKTLAFLSVISLLISV, FLLDQYFLLFLSVGLIVTWSI, LFLVFLGWEGVGFLSFLLISW, AVIYNRIGDIGLITFMSLAVL, FVLFMLFGLILAAAGKSAQFG, TPVSALLHSSTMVVAGVFLLV, ANTIVLVLGGTTALFAASTAI, IIAYSTTSQLGLMVAAIGIG, THAFFKAMLFLCLGSVIHSLN, SACLAMGSLALMGTPFLAGFY, LGIVATMLTTVYSFRIVFFCF, ALLRLSIGTILSGWFFSNFIF, GLPLLVTVVGLTVIFISLSYL, and YIASSIAAITIIATLTFIVLS.

Belongs to the complex I subunit 5 family.

The protein localises to the mitochondrion inner membrane. It carries out the reaction a ubiquinone + NADH + 5 H(+)(in) = a ubiquinol + NAD(+) + 4 H(+)(out). Core subunit of the mitochondrial membrane respiratory chain NADH dehydrogenase (Complex I) that is believed to belong to the minimal assembly required for catalysis. Complex I functions in the transfer of electrons from NADH to the respiratory chain. The immediate electron acceptor for the enzyme is believed to be ubiquinone. The polypeptide is NADH-ubiquinone oxidoreductase chain 5 (ND5) (Paracentrotus lividus (Common sea urchin)).